The following is a 267-amino-acid chain: Putative transcription factor Ovo-like 1 (267 aa).

4 C2H2-type zinc fingers span residues 118-140 (FTCR…MKCH), 146-168 (HLCT…VRTH), 174-197 (YKCS…KKIH), and 213-235 (YVCE…LKEH).

In terms of tissue distribution, expressed in fetal kidney, and also in adult pancreas and placenta. Not expressed in intestine, peripheral blood lymphocytes and ovary.

Its subcellular location is the nucleus. Its function is as follows. Putative transcription factor. Involved in hair formation and spermatogenesis. May function in the differentiation and/or maintenance of the urogenital system. The chain is Putative transcription factor Ovo-like 1 (OVOL1) from Homo sapiens (Human).